A 492-amino-acid chain; its full sequence is Cytochrome P450 2L1 (492 aa).

Residue Cys436 coordinates heme.

It belongs to the cytochrome P450 family. The cofactor is heme.

It is found in the endoplasmic reticulum membrane. Its subcellular location is the microsome membrane. It carries out the reaction an organic molecule + reduced [NADPH--hemoprotein reductase] + O2 = an alcohol + oxidized [NADPH--hemoprotein reductase] + H2O + H(+). In terms of biological role, efficient in catalyzing the monooxygenation of benzphetamine, aminopyrine, benzo(a)pyrene, progesterone, and testosterone. The chain is Cytochrome P450 2L1 (CYP2L1) from Panulirus argus (Caribbean spiny lobster).